The following is a 446-amino-acid chain: Beta-glucosidase A (446 aa).

Residue E166 is the Proton donor of the active site. The active-site Nucleophile is E351.

It belongs to the glycosyl hydrolase 1 family.

The catalysed reaction is Hydrolysis of terminal, non-reducing beta-D-glucosyl residues with release of beta-D-glucose.. The protein operates within glycan metabolism; cellulose degradation. This Thermotoga maritima (strain ATCC 43589 / DSM 3109 / JCM 10099 / NBRC 100826 / MSB8) protein is Beta-glucosidase A (bglA).